The primary structure comprises 501 residues: Vitamin D 25-hydroxylase (501 aa).

A250 contributes to the substrate binding site. Residue C448 coordinates heme.

This sequence belongs to the cytochrome P450 family. Homodimer. Heme serves as cofactor. Highly expressed in the liver and testis.

The protein localises to the endoplasmic reticulum membrane. The protein resides in the microsome membrane. It carries out the reaction calciol + reduced [NADPH--hemoprotein reductase] + O2 = calcidiol + oxidized [NADPH--hemoprotein reductase] + H2O + H(+). It catalyses the reaction vitamin D2 + reduced [NADPH--hemoprotein reductase] + O2 = 25-hydroxyvitamin D2 + oxidized [NADPH--hemoprotein reductase] + H2O + H(+). The enzyme catalyses 1alpha-hydroxyvitamin D2 + reduced [NADPH--hemoprotein reductase] + O2 = 1alpha,25-dihydroxyvitamin D2 + oxidized [NADPH--hemoprotein reductase] + H2O + H(+). The catalysed reaction is alfacalcidol + reduced [NADPH--hemoprotein reductase] + O2 = calcitriol + oxidized [NADPH--hemoprotein reductase] + H2O + H(+). It functions in the pathway hormone biosynthesis; vitamin D biosynthesis. In terms of biological role, a cytochrome P450 monooxygenase involved in activation of vitamin D precursors. Catalyzes hydroxylation at C-25 of both forms of vitamin D, vitamin D(2) and D(3) (calciol). Can metabolize vitamin D analogs/prodrugs 1alpha-hydroxyvitamin D(2) (doxercalciferol) and 1alpha-hydroxyvitamin D(3) (alfacalcidol) forming 25-hydroxy derivatives. Mechanistically, uses molecular oxygen inserting one oxygen atom into a substrate, and reducing the second into a water molecule, with two electrons provided by NADPH via cytochrome P450 reductase (CPR; NADPH-ferrihemoprotein reductase). This is Vitamin D 25-hydroxylase (Cyp2r1) from Mus musculus (Mouse).